The primary structure comprises 288 residues: Nucleotide-binding protein ASA_0318 (288 aa).

8-15 is a binding site for ATP; the sequence is GRSGSGKT. Residue 56-59 participates in GTP binding; sequence DVRN.

It belongs to the RapZ-like family.

Displays ATPase and GTPase activities. The sequence is that of Nucleotide-binding protein ASA_0318 from Aeromonas salmonicida (strain A449).